The following is a 325-amino-acid chain: 26S proteasome non-ATPase regulatory subunit 7 (325 aa).

The MPN domain maps to 8–142; it reads TIVHPTVLLS…TKSYVTVEEI (135 aa). Positions 285–325 are disordered; the sequence is KKADIINSTPPTTATSPSVADKGKEKEQNAFNGADKPSKQA. Residues 292-302 are compositionally biased toward low complexity; the sequence is STPPTTATSPS.

The protein belongs to the peptidase M67A family.

In terms of biological role, acts as a regulatory subunit of the 26S proteasome which is involved in the ATP-dependent degradation of ubiquitinated proteins. The polypeptide is 26S proteasome non-ATPase regulatory subunit 7 (psmD7) (Dictyostelium discoideum (Social amoeba)).